The following is a 698-amino-acid chain: DNA ligase (698 aa).

Residues 47–51 (DAQYD), 96–97 (SL), and E128 each bind NAD(+). Residue K130 is the N6-AMP-lysine intermediate of the active site. Residues R151, E186, K303, and K327 each coordinate NAD(+). Positions 422, 425, 440, and 446 each coordinate Zn(2+). One can recognise a BRCT domain in the interval 620-698 (GDNLLLSNQT…EEEWIKMVNE (79 aa)).

This sequence belongs to the NAD-dependent DNA ligase family. LigA subfamily. The cofactor is Mg(2+). It depends on Mn(2+) as a cofactor.

The enzyme catalyses NAD(+) + (deoxyribonucleotide)n-3'-hydroxyl + 5'-phospho-(deoxyribonucleotide)m = (deoxyribonucleotide)n+m + AMP + beta-nicotinamide D-nucleotide.. DNA ligase that catalyzes the formation of phosphodiester linkages between 5'-phosphoryl and 3'-hydroxyl groups in double-stranded DNA using NAD as a coenzyme and as the energy source for the reaction. It is essential for DNA replication and repair of damaged DNA. In Orientia tsutsugamushi (strain Boryong) (Rickettsia tsutsugamushi), this protein is DNA ligase.